The sequence spans 239 residues: Ribosomal RNA small subunit methyltransferase G (239 aa).

S-adenosyl-L-methionine is bound by residues G77, F82, 128–129 (AE), and R146. Positions 214–239 (IDKKRQTPKKYPRKPGTPNKTPLLEK) are disordered.

The protein belongs to the methyltransferase superfamily. RNA methyltransferase RsmG family.

Its subcellular location is the cytoplasm. Specifically methylates the N7 position of guanine in position 535 of 16S rRNA. This Staphylococcus aureus (strain Mu3 / ATCC 700698) protein is Ribosomal RNA small subunit methyltransferase G.